Here is a 272-residue protein sequence, read N- to C-terminus: Dermonecrotic toxin SpeSicTox-betaIB1b (272 aa).

Residue His5 is part of the active site. 2 residues coordinate Mg(2+): Glu25 and Asp27. Residue His41 is the Nucleophile of the active site. 2 cysteine pairs are disulfide-bonded: Cys45/Cys51 and Cys47/Cys191. A Mg(2+)-binding site is contributed by Asp85.

It belongs to the arthropod phospholipase D family. Class II subfamily. Mg(2+) is required as a cofactor. In terms of tissue distribution, expressed by the venom gland.

Its subcellular location is the secreted. It catalyses the reaction an N-(acyl)-sphingosylphosphocholine = an N-(acyl)-sphingosyl-1,3-cyclic phosphate + choline. It carries out the reaction an N-(acyl)-sphingosylphosphoethanolamine = an N-(acyl)-sphingosyl-1,3-cyclic phosphate + ethanolamine. The enzyme catalyses a 1-acyl-sn-glycero-3-phosphocholine = a 1-acyl-sn-glycero-2,3-cyclic phosphate + choline. The catalysed reaction is a 1-acyl-sn-glycero-3-phosphoethanolamine = a 1-acyl-sn-glycero-2,3-cyclic phosphate + ethanolamine. Its function is as follows. Dermonecrotic toxins cleave the phosphodiester linkage between the phosphate and headgroup of certain phospholipids (sphingolipid and lysolipid substrates), forming an alcohol (often choline) and a cyclic phosphate. This toxin acts on sphingomyelin (SM). It may also act on ceramide phosphoethanolamine (CPE), lysophosphatidylcholine (LPC) and lysophosphatidylethanolamine (LPE), but not on lysophosphatidylserine (LPS), and lysophosphatidylglycerol (LPG). It acts by transphosphatidylation, releasing exclusively cyclic phosphate products as second products. Induces dermonecrosis, hemolysis, increased vascular permeability, edema, inflammatory response, and platelet aggregation. In Sicarius peruensis (Six-eyed sand spider), this protein is Dermonecrotic toxin SpeSicTox-betaIB1b.